We begin with the raw amino-acid sequence, 163 residues long: ATP synthase subunit b 1 (163 aa).

A helical membrane pass occupies residues 7–27; the sequence is AETWVAIAFVILLGVFAYLGV.

It belongs to the ATPase B chain family. In terms of assembly, F-type ATPases have 2 components, F(1) - the catalytic core - and F(0) - the membrane proton channel. F(1) has five subunits: alpha(3), beta(3), gamma(1), delta(1), epsilon(1). F(0) has three main subunits: a(1), b(2) and c(10-14). The alpha and beta chains form an alternating ring which encloses part of the gamma chain. F(1) is attached to F(0) by a central stalk formed by the gamma and epsilon chains, while a peripheral stalk is formed by the delta and b chains.

The protein resides in the cell inner membrane. Functionally, f(1)F(0) ATP synthase produces ATP from ADP in the presence of a proton or sodium gradient. F-type ATPases consist of two structural domains, F(1) containing the extramembraneous catalytic core and F(0) containing the membrane proton channel, linked together by a central stalk and a peripheral stalk. During catalysis, ATP synthesis in the catalytic domain of F(1) is coupled via a rotary mechanism of the central stalk subunits to proton translocation. Component of the F(0) channel, it forms part of the peripheral stalk, linking F(1) to F(0). The chain is ATP synthase subunit b 1 from Rhodopseudomonas palustris (strain ATCC BAA-98 / CGA009).